Reading from the N-terminus, the 595-residue chain is Probable xyloglucan glycosyltransferase 9 (595 aa).

A run of 2 helical transmembrane segments spans residues 30-50 and 77-97; these read AFVV…INGW and ATYV…LFLI. Aspartate 177 is an active-site residue. Positions 236 and 238 each coordinate substrate. Residue aspartate 330 is part of the active site. 4 helical membrane-spanning segments follow: residues 408–428, 433–453, 545–564, and 570–590; these read LILP…TMFV, LPDW…ILPS, IYKK…ARSL, and IHFY…LDLI.

It belongs to the glycosyltransferase 2 family. Plant cellulose synthase-like C subfamily.

The protein resides in the golgi apparatus membrane. Probable beta-1,4-glucan synthase rather involved in the synthesis of the xyloglucan backbone than cellulose. Seems to work simultaneously with xyloglucan 6-xylosyltransferase. Xyloglucan is a noncellulosic polysaccharides of plant cell wall and consists of a glucan backbone substituted by xylose, galactose and fucose. This Oryza sativa subsp. japonica (Rice) protein is Probable xyloglucan glycosyltransferase 9 (CSLC9).